The chain runs to 335 residues: GTPase Obg (335 aa).

Positions 1–158 constitute an Obg domain; sequence MFVDQITLEL…RQVELELKLI (158 aa). The disordered stretch occupies residues 126 to 145; that stretch reads NTFFKTSVNRAPTKATPGKP. One can recognise an OBG-type G domain in the interval 159 to 334; the sequence is ADIGLVGFPN…LYRFFTQRLA (176 aa). GTP is bound by residues 165-172, 190-194, 215-218, 285-288, and 315-317; these read GFPNAGKS, FTTLA, DIPG, NKID, and SGL. Mg(2+) is bound by residues Ser172 and Thr192.

Belongs to the TRAFAC class OBG-HflX-like GTPase superfamily. OBG GTPase family. As to quaternary structure, monomer. Requires Mg(2+) as cofactor.

It is found in the cytoplasm. Functionally, an essential GTPase which binds GTP, GDP and possibly (p)ppGpp with moderate affinity, with high nucleotide exchange rates and a fairly low GTP hydrolysis rate. Plays a role in control of the cell cycle, stress response, ribosome biogenesis and in those bacteria that undergo differentiation, in morphogenesis control. In Chlamydia pneumoniae (Chlamydophila pneumoniae), this protein is GTPase Obg.